Reading from the N-terminus, the 264-residue chain is MQQYLDLMKHILAEGVDKSDRTGTGTRSVFGYQMRFDLSKGFPLVTTKKCHMRSIIHELLWFLKGDTNIAYLRDNKVSIWDEWADENGDLGPVYGAQWRSWPTQSGDAIDQIAQVIAQIKSQPDSRRLIVSAWNVGELDKMALAPCHAFFQFYVADGKLSCQLYQRSCDVFLGLPFNIASYALLTMMVAQQCDLALGDFVWTGGDTHLYSNHMEQTALQLSREPRPLPTMTILRKPASIFDYQFEDFELTNYDPHPHIKAPVAV.

Arg21 provides a ligand contact to dUMP. Residue His51 participates in (6R)-5,10-methylene-5,6,7,8-tetrahydrofolate binding. 126–127 (RR) is a dUMP binding site. Cys146 functions as the Nucleophile in the catalytic mechanism. DUMP contacts are provided by residues 166–169 (RSCD), Asn177, and 207–209 (HLY). (6R)-5,10-methylene-5,6,7,8-tetrahydrofolate is bound at residue Asp169. Ala263 contacts (6R)-5,10-methylene-5,6,7,8-tetrahydrofolate.

This sequence belongs to the thymidylate synthase family. Bacterial-type ThyA subfamily. In terms of assembly, homodimer.

The protein resides in the cytoplasm. The catalysed reaction is dUMP + (6R)-5,10-methylene-5,6,7,8-tetrahydrofolate = 7,8-dihydrofolate + dTMP. It participates in pyrimidine metabolism; dTTP biosynthesis. Its function is as follows. Catalyzes the reductive methylation of 2'-deoxyuridine-5'-monophosphate (dUMP) to 2'-deoxythymidine-5'-monophosphate (dTMP) while utilizing 5,10-methylenetetrahydrofolate (mTHF) as the methyl donor and reductant in the reaction, yielding dihydrofolate (DHF) as a by-product. This enzymatic reaction provides an intracellular de novo source of dTMP, an essential precursor for DNA biosynthesis. The chain is Thymidylate synthase from Shewanella sp. (strain MR-4).